Consider the following 472-residue polypeptide: Cannabinoid receptor 1 (472 aa).

At 1–116 (MKSILDGLAD…CFMVLNPSQQ (116 aa)) the chain is on the extracellular side. Positions 2-23 (KSILDGLADTTFRTITTDLLYV) are required for mitochondrial localization. Asparagine 77 and asparagine 83 each carry an N-linked (GlcNAc...) asparagine glycan. The chain crosses the membrane as a helical span at residues 117 to 142 (LAIAVLSLTLGTFTVLENLLVLCVIL). Over 143 to 154 (HSRSLRCRPSYH) the chain is Cytoplasmic. Residues 155 to 175 (FIGSLAVADLLGSVIFVYSFI) traverse the membrane as a helical segment. Residues 176-187 (DFHVFHRKDSRN) lie on the Extracellular side of the membrane. Residues 188–212 (VFLFKLGGVTASFTASVGSLFLTAI) form a helical membrane-spanning segment. Residues 213–232 (DRYISIHRPLAYKRIVTRPK) are Cytoplasmic-facing. A helical membrane pass occupies residues 233-255 (AVVAFCLMWTIAIVIAVLPLLGW). Residues 256 to 273 (NCEKLQSVCSDIFPHIDE) lie on the Extracellular side of the membrane. A helical membrane pass occupies residues 274 to 299 (TYLMFWIGVTSVLLLFIVYAYMYILW). Over 300–344 (KAHSHAVRMIQRGTQKSIIIHTSEDGKVQVTRPDQARMDIRLAKT) the chain is Cytoplasmic. A helical transmembrane segment spans residues 345 to 365 (LVLILVVLIICWGPLLAIMVY). Residues 366–377 (DVFGKMNKLIKT) are Extracellular-facing. Residues 378 to 399 (VFAFCSMLCLLNSTVNPIIYAL) traverse the membrane as a helical segment. The Cytoplasmic segment spans residues 400 to 472 (RSKDLRHAFR…VSTDTSAEAL (73 aa)). The S-palmitoyl cysteine moiety is linked to residue cysteine 415. Residues serine 425 and serine 429 each carry the phosphoserine modification.

It belongs to the G-protein coupled receptor 1 family. Interacts (via C-terminus) with CNRIP1; this interaction attenuates constitutive, but not agonist-dependent, inhibition of voltage-gated Ca(2+) channels in neurons. Associates with G protein alpha subunits, including G(i) alpha-1/GNAI1, G(i) alpha-3/GNAI3 and G(o)-alpha/GNAO1; palmitoylation is important for interaction with GNAI3 and GNAO1. Post-translationally, palmitoylation at Cys-415 is important for recruitment at plasma membrane and lipid rafts and association with G protein alpha subunits. Widely expressed, with highest levels in fetal and adult brain. Expression levels of isoform 2 and isoform 3 are much lower than those of isoform 1.

Its subcellular location is the cell membrane. It localises to the membrane raft. The protein localises to the mitochondrion outer membrane. The protein resides in the cell projection. It is found in the axon. Its subcellular location is the presynapse. With respect to regulation, hemopressin, a peptide derived from hemoglobin subunit alpha (HBA1 and/or HBA2), acts as an antagonist peptide: hemopressin-binding efficiently blocks cannabinoid receptor CNR1 and subsequent signaling. Functionally, G-protein coupled receptor for endogenous cannabinoids (eCBs), including N-arachidonoylethanolamide (also called anandamide or AEA) and 2-arachidonoylglycerol (2-AG), as well as phytocannabinoids, such as delta(9)-tetrahydrocannabinol (THC). Mediates many cannabinoid-induced effects, acting, among others, on food intake, memory loss, gastrointestinal motility, catalepsy, ambulatory activity, anxiety, chronic pain. Signaling typically involves reduction in cyclic AMP. In the hypothalamus, may have a dual effect on mitochondrial respiration depending upon the agonist dose and possibly upon the cell type. Increases respiration at low doses, while decreases respiration at high doses. At high doses, CNR1 signal transduction involves G-protein alpha-i protein activation and subsequent inhibition of mitochondrial soluble adenylate cyclase, decrease in cyclic AMP concentration, inhibition of protein kinase A (PKA)-dependent phosphorylation of specific subunits of the mitochondrial electron transport system, including NDUFS2. In the hypothalamus, inhibits leptin-induced reactive oxygen species (ROS) formation and mediates cannabinoid-induced increase in SREBF1 and FASN gene expression. In response to cannabinoids, drives the release of orexigenic beta-endorphin, but not that of melanocyte-stimulating hormone alpha/alpha-MSH, from hypothalamic POMC neurons, hence promoting food intake. In the hippocampus, regulates cellular respiration and energy production in response to cannabinoids. Involved in cannabinoid-dependent depolarization-induced suppression of inhibition (DSI), a process in which depolarization of CA1 postsynaptic pyramidal neurons mobilizes eCBs, which retrogradely activate presynaptic CB1 receptors, transiently decreasing GABAergic inhibitory neurotransmission. Also reduces excitatory synaptic transmission. In superior cervical ganglions and cerebral vascular smooth muscle cells, inhibits voltage-gated Ca(2+) channels in a constitutive, as well as agonist-dependent manner. In cerebral vascular smooth muscle cells, cannabinoid-induced inhibition of voltage-gated Ca(2+) channels leads to vasodilation and decreased vascular tone. Induces leptin production in adipocytes and reduces LRP2-mediated leptin clearance in the kidney, hence participating in hyperleptinemia. In adipose tissue, CNR1 signaling leads to increased expression of SREBF1, ACACA and FASN genes. In the liver, activation by endocannabinoids leads to increased de novo lipogenesis and reduced fatty acid catabolism, associated with increased expression of SREBF1/SREBP-1, GCK, ACACA, ACACB and FASN genes. May also affect de novo cholesterol synthesis and HDL-cholesteryl ether uptake. Peripherally modulates energy metabolism. In high carbohydrate diet-induced obesity, may decrease the expression of mitochondrial dihydrolipoyl dehydrogenase/DLD in striated muscles, as well as that of selected glucose/ pyruvate metabolic enzymes, hence affecting energy expenditure through mitochondrial metabolism. In response to cannabinoid anandamide, elicits a pro-inflammatory response in macrophages, which involves NLRP3 inflammasome activation and IL1B and IL18 secretion. In macrophages infiltrating pancreatic islets, this process may participate in the progression of type-2 diabetes and associated loss of pancreatic beta-cells. Binds both 2-arachidonoylglycerol (2-AG) and anandamide. In terms of biological role, only binds 2-arachidonoylglycerol (2-AG) with high affinity. Contrary to its effect on isoform 1, 2-AG behaves as an inverse agonist on isoform 2 in assays measuring GTP binding to membranes. Its function is as follows. Only binds 2-arachidonoylglycerol (2-AG) with high affinity. Contrary to its effect on isoform 1, 2-AG behaves as an inverse agonist on isoform 3 in assays measuring GTP binding to membranes. The sequence is that of Cannabinoid receptor 1 (CNR1) from Homo sapiens (Human).